The following is a 420-amino-acid chain: Serine hydroxymethyltransferase (420 aa).

Residues Leu121 and 125–127 (GHL) each bind (6S)-5,6,7,8-tetrahydrofolate. An N6-(pyridoxal phosphate)lysine modification is found at Lys229.

The protein belongs to the SHMT family. In terms of assembly, homodimer. Pyridoxal 5'-phosphate serves as cofactor.

The protein localises to the cytoplasm. The catalysed reaction is (6R)-5,10-methylene-5,6,7,8-tetrahydrofolate + glycine + H2O = (6S)-5,6,7,8-tetrahydrofolate + L-serine. The protein operates within one-carbon metabolism; tetrahydrofolate interconversion. It functions in the pathway amino-acid biosynthesis; glycine biosynthesis; glycine from L-serine: step 1/1. In terms of biological role, catalyzes the reversible interconversion of serine and glycine with tetrahydrofolate (THF) serving as the one-carbon carrier. This reaction serves as the major source of one-carbon groups required for the biosynthesis of purines, thymidylate, methionine, and other important biomolecules. Also exhibits THF-independent aldolase activity toward beta-hydroxyamino acids, producing glycine and aldehydes, via a retro-aldol mechanism. This Pasteurella multocida (strain Pm70) protein is Serine hydroxymethyltransferase.